The primary structure comprises 523 residues: Keratin, type II cytoskeletal 71 (523 aa).

The segment at 1–129 is head; that stretch reads MSRQFTCKSG…DPEIQKVRAQ (129 aa). Residues 130–165 are coil 1A; the sequence is EREQIKALNNKFASFIDKVRFLEQQNQVLETKWELL. The IF rod domain occupies 130–443; it reads EREQIKALNN…KLLESEECRM (314 aa). The segment at 166-184 is linker 1; sequence QQLDLNNCKNNLEPILEGY. The interval 185–276 is coil 1B; sequence ISNLRKQLET…CLFEAEITQI (92 aa). Residues 277-300 are linker 12; it reads QSHISDMSVILSMDNNRNLDLDSI. A coil 2 region spans residues 301 to 439; the sequence is IDEVRTQYEE…ATYRKLLESE (139 aa). Positions 440-523 are tail; the sequence is ECRMSGEFPS…LSAPSKKTSR (84 aa). Positions 492–523 are disordered; the sequence is GGEGRSRGSANDYKDTLGKGSSLSAPSKKTSR. The span at 493–508 shows a compositional bias: basic and acidic residues; that stretch reads GEGRSRGSANDYKDTL. The segment covering 510-523 has biased composition (polar residues); it reads KGSSLSAPSKKTSR.

It belongs to the intermediate filament family. As to quaternary structure, heterodimer of a type I and a type II keratin. Associates with KRT16 and/or KRT17. Highly expressed in hair follicles from scalp. Specifically expressed in the inner root sheath (IRS) of the hair follicle. Present in the all 3 IRS layers: the cuticle, the Henle and the Huxley layers. Also detected in the pseudopods of specialized Huxley cells, termed Fluegelzellen, along the area of differentiated Henle cells (at protein level).

It is found in the cytoplasm. The protein resides in the cytoskeleton. Plays a central role in hair formation. Essential component of keratin intermediate filaments in the inner root sheath (IRS) of the hair follicle. The polypeptide is Keratin, type II cytoskeletal 71 (KRT71) (Homo sapiens (Human)).